Here is a 498-residue protein sequence, read N- to C-terminus: MRINPTTSGPGVSTLEKKNPGRXAQIIGPVLDVAFPPGKMPNIYNALVVKGRDTVGQQVNVTCEVQQLLGNNRVRAVAMSATDGLMRGMEVIDTGAPLSVPVGGATLGRIFNVLGEPVDNLGPVDTRTTFPIHRSAPAFIQLDTKLSIFETGIKVVDLLAPYRRGGKIGLFGGAGVGKTVLIMELINNIAKAHGGVSVFGGVGERTREGNDLYMEMKESGVINEQNLAESKVALVYGQMNEPPGARMRVGLTALTMAEYFRDVNEQDVLLFIDNIFRFVQAGSEVSALLGRMPSAVGYQPTLSTEMGSLQERITSTKEGSITSIQAVYVPADDLTDPAPATTFAHLDATTVLSRGLAAKGIYPAVDPLDSTSTMLQPRIVGEEHYETAQRVKQTSQRYKELQDIIAILGLDELSEEDRLTVARARKIERFLSQPFFVAEVFTGSPGKYVGLAETIRGFQLILSGELDGLPEQAFYLVGNIDEATAKAMNLDVESXLKK.

Residue Gly172–Thr179 coordinates ATP.

Belongs to the ATPase alpha/beta chains family. As to quaternary structure, F-type ATPases have 2 components, CF(1) - the catalytic core - and CF(0) - the membrane proton channel. CF(1) has five subunits: alpha(3), beta(3), gamma(1), delta(1), epsilon(1). CF(0) has four main subunits: a(1), b(1), b'(1) and c(9-12).

It is found in the plastid. The protein resides in the chloroplast thylakoid membrane. It carries out the reaction ATP + H2O + 4 H(+)(in) = ADP + phosphate + 5 H(+)(out). Functionally, produces ATP from ADP in the presence of a proton gradient across the membrane. The catalytic sites are hosted primarily by the beta subunits. This is ATP synthase subunit beta, chloroplastic from Aristolochia macrophylla (Dutchman's pipe vine).